The primary structure comprises 102 residues: Glutaredoxin-C13 (102 aa).

One can recognise a Glutaredoxin domain in the interval 1–101; that stretch reads MDKVMRMSSE…PLIKPYQSIL (101 aa). Cysteines 21 and 24 form a disulfide.

The protein belongs to the glutaredoxin family. CC-type subfamily.

It is found in the cytoplasm. In terms of biological role, has a glutathione-disulfide oxidoreductase activity in the presence of NADPH and glutathione reductase. Reduces low molecular weight disulfides and proteins. The polypeptide is Glutaredoxin-C13 (GRXC13) (Arabidopsis thaliana (Mouse-ear cress)).